The following is a 371-amino-acid chain: F-box protein At2g41170 (371 aa).

Residues 56 to 102 (KMSLLDLPDLTLDCILEKLSPSELCAMTSVCSELRDKCVSDHLWEKH) enclose the F-box domain.

The protein is F-box protein At2g41170 of Arabidopsis thaliana (Mouse-ear cress).